The primary structure comprises 348 residues: Chloroacetanilide N-alkylformylase, oxygenase component (348 aa).

The Rieske domain maps to 7–108 (WYAVAWCDEV…ARERHKLIWA (102 aa)). [2Fe-2S] cluster-binding residues include cysteine 47, histidine 49, cysteine 66, and histidine 69. Fe cation contacts are provided by histidine 159 and histidine 164. Histidine 250 is a substrate binding site. Aspartate 293 serves as a coordination point for Fe cation.

The chloroacetanilide N-alkylformylase multicomponent enzyme system is composed of an oxygenase component (CndA) and an electron transfer component formed by a ferredoxin reductase (CndC1) and a ferredoxin (CndB1). In vitro, chloroacetanilide N-alkylformylase assays in which CndB1 is substituted for CndB2 demonstrate that the two enzymes possess nearly identical activities. The cofactor is [2Fe-2S] cluster.

The catalysed reaction is butachlor + 2 reduced [2Fe-2S]-[ferredoxin] + O2 + 2 H(+) = butyl formate + N-(2,6-diethylphenyl)-2-chloroacetamide + 2 oxidized [2Fe-2S]-[ferredoxin] + H2O. The enzyme catalyses alachlor + 2 reduced [2Fe-2S]-[ferredoxin] + O2 + 2 H(+) = methyl formate + N-(2,6-diethylphenyl)-2-chloroacetamide + 2 oxidized [2Fe-2S]-[ferredoxin] + H2O. It catalyses the reaction acetochlor + 2 reduced [2Fe-2S]-[ferredoxin] + O2 + 2 H(+) = N-(2-ethyl-6-methylphenyl)-2-chloroacetamide + ethyl formate + 2 oxidized [2Fe-2S]-[ferredoxin] + H2O. Activity enhanced by Fe(2+) and Mg(2+) ions. Divalent cations such as Ca(2+), Cr(2+), Co(2+), and Mn(2+) show moderate inhibition of the enzyme, whereas heavy metal ions such as Ag(+), Cu(2+), Pb(2+), Hg(2+), Ni(2+) and Zn(2+) severely inhibit the activity. Component of the chloroacetanilide N-alkylformylase multicomponent enzyme system involved in the degradation of chloroacetanilide herbicides (N-alkoxyalkyl-N-chloroacetyl-substituted aniline derivatives). In vitro, catalyzes the N-dealkylation of butachlor, alachlor and acetochlor to yield 2-chloro-N-(2,6-diethylphenyl)acetamide (CDEPA) (for alachlor and butachlor) and 2-chloro-N-(2-methyl-6-ethylphenyl)acetamide (CMEPA) (for acetochlor). This chain is Chloroacetanilide N-alkylformylase, oxygenase component, found in Rhizorhabdus wittichii (strain DC-6 / KACC 16600) (Sphingomonas wittichii).